A 625-amino-acid polypeptide reads, in one-letter code: tRNA uridine 5-carboxymethylaminomethyl modification enzyme MnmG (625 aa).

Residues 10–15, V122, and S177 contribute to the FAD site; that span reads GGGHAG. 271–285 is an NAD(+) binding site; sequence GPRYCPSIEDKVNRF. Residue Q368 coordinates FAD.

Belongs to the MnmG family. In terms of assembly, homodimer. Heterotetramer of two MnmE and two MnmG subunits. It depends on FAD as a cofactor.

It localises to the cytoplasm. Functionally, NAD-binding protein involved in the addition of a carboxymethylaminomethyl (cmnm) group at the wobble position (U34) of certain tRNAs, forming tRNA-cmnm(5)s(2)U34. In Wolinella succinogenes (strain ATCC 29543 / DSM 1740 / CCUG 13145 / JCM 31913 / LMG 7466 / NCTC 11488 / FDC 602W) (Vibrio succinogenes), this protein is tRNA uridine 5-carboxymethylaminomethyl modification enzyme MnmG.